The sequence spans 391 residues: Tryptophan synthase beta chain (391 aa).

Lysine 84 carries the N6-(pyridoxal phosphate)lysine modification.

This sequence belongs to the TrpB family. Tetramer of two alpha and two beta chains. Requires pyridoxal 5'-phosphate as cofactor.

It catalyses the reaction (1S,2R)-1-C-(indol-3-yl)glycerol 3-phosphate + L-serine = D-glyceraldehyde 3-phosphate + L-tryptophan + H2O. Its pathway is amino-acid biosynthesis; L-tryptophan biosynthesis; L-tryptophan from chorismate: step 5/5. Its function is as follows. The beta subunit is responsible for the synthesis of L-tryptophan from indole and L-serine. The polypeptide is Tryptophan synthase beta chain (Caldanaerobacter subterraneus subsp. tengcongensis (strain DSM 15242 / JCM 11007 / NBRC 100824 / MB4) (Thermoanaerobacter tengcongensis)).